Reading from the N-terminus, the 507-residue chain is 3-oxosteroid 1-dehydrogenase (507 aa).

Position 9 to 38 (9 to 38) interacts with FAD; the sequence is DLLVVGSGGGALTGAYTAAAQGLTTIVLEK. Positions 299-385 are disordered; it reads GLVVDSPGSV…LPRPDYRPER (87 aa).

It belongs to the FAD-dependent oxidoreductase 2 family. 3-oxosteroid dehydrogenase subfamily. It depends on FAD as a cofactor.

It localises to the cell membrane. The enzyme catalyses a 3-oxosteroid + A = a 3-oxo-Delta(1)-steroid + AH2. It functions in the pathway lipid metabolism; steroid degradation. Functionally, catalyzes the elimination of the C-1 and C-2 hydrogen atoms of the A-ring from the polycyclic ring structure of 3-ketosteroids. This is 3-oxosteroid 1-dehydrogenase from Rhodococcus opacus (Nocardia opaca).